The sequence spans 356 residues: GDSL esterase/lipase At5g37690 (356 aa).

The N-terminal stretch at 1 to 18 is a signal peptide; sequence MMILRLALAIVISTYATA. Ser-34 (nucleophile) is an active-site residue. N-linked (GlcNAc...) asparagine glycans are attached at residues Asn-116 and Asn-291. Residues Asp-322 and His-325 contribute to the active site.

This sequence belongs to the 'GDSL' lipolytic enzyme family.

The protein localises to the secreted. The sequence is that of GDSL esterase/lipase At5g37690 from Arabidopsis thaliana (Mouse-ear cress).